A 568-amino-acid polypeptide reads, in one-letter code: 2-succinyl-5-enolpyruvyl-6-hydroxy-3-cyclohexene-1-carboxylate synthase (568 aa).

It belongs to the TPP enzyme family. MenD subfamily. In terms of assembly, homodimer. The cofactor is Mg(2+). Mn(2+) serves as cofactor. It depends on thiamine diphosphate as a cofactor.

The catalysed reaction is isochorismate + 2-oxoglutarate + H(+) = 5-enolpyruvoyl-6-hydroxy-2-succinyl-cyclohex-3-ene-1-carboxylate + CO2. Its pathway is quinol/quinone metabolism; 1,4-dihydroxy-2-naphthoate biosynthesis; 1,4-dihydroxy-2-naphthoate from chorismate: step 2/7. It participates in quinol/quinone metabolism; menaquinone biosynthesis. Functionally, catalyzes the thiamine diphosphate-dependent decarboxylation of 2-oxoglutarate and the subsequent addition of the resulting succinic semialdehyde-thiamine pyrophosphate anion to isochorismate to yield 2-succinyl-5-enolpyruvyl-6-hydroxy-3-cyclohexene-1-carboxylate (SEPHCHC). This chain is 2-succinyl-5-enolpyruvyl-6-hydroxy-3-cyclohexene-1-carboxylate synthase, found in Haemophilus influenzae (strain PittEE).